Reading from the N-terminus, the 307-residue chain is N-acetylmuramic acid 6-phosphate etherase (307 aa).

The SIS domain maps to 59–222; the sequence is TADRLRQGGR…STGVMVKLGK (164 aa). Glu87 serves as the catalytic Proton donor. Glu118 is a catalytic residue.

The protein belongs to the GCKR-like family. MurNAc-6-P etherase subfamily. Homodimer.

It catalyses the reaction N-acetyl-D-muramate 6-phosphate + H2O = N-acetyl-D-glucosamine 6-phosphate + (R)-lactate. Its pathway is amino-sugar metabolism; N-acetylmuramate degradation. Specifically catalyzes the cleavage of the D-lactyl ether substituent of MurNAc 6-phosphate, producing GlcNAc 6-phosphate and D-lactate. The sequence is that of N-acetylmuramic acid 6-phosphate etherase from Nostoc sp. (strain PCC 7120 / SAG 25.82 / UTEX 2576).